The primary structure comprises 267 residues: Lyso-ornithine lipid O-acyltransferase (267 aa).

A helical membrane pass occupies residues 7–27 (IFLVVAAMVALSLSLIPFQYL).

It belongs to the 1-acyl-sn-glycerol-3-phosphate acyltransferase family. OlsA subfamily.

It localises to the membrane. It catalyses the reaction a lyso-ornithine lipid + a fatty acyl-[ACP] = an N(2)-[(3R)-3-(acyloxy)acyl]-L-ornithine lipid + holo-[ACP]. The protein operates within lipid metabolism. Catalyzes the second step in the formation of ornithine lipids, which are phosphorus-free membrane lipids. Uses acyl-acyl carrier protein (acyl-AcpP) as an acyl donor and converts lyso-ornithine lipid (LOL) into ornithine lipid (OL). The polypeptide is Lyso-ornithine lipid O-acyltransferase (Brucella abortus (strain 2308)).